The following is a 1155-amino-acid chain: RhoGEF domain-containing protein gxcJ (1155 aa).

Disordered regions lie at residues E114–K216, L259–N333, L429–E460, L484–T508, and S604–Q639. Low complexity-rich tracts occupy residues N115–N153, T161–N211, and N260–N303. Positions N192–L257 form a coiled coil. Polar residues predominate over residues Y304–E319. Positions N320–I330 are enriched in basic and acidic residues. Low complexity predominate over residues F441 to D457. The segment covering S604–N637 has biased composition (low complexity). The region spanning H700–Q874 is the DH domain. Residues S1084–T1155 form a disordered region. Low complexity-rich tracts occupy residues S1093–N1121 and Q1128–Q1137.

In terms of biological role, GTPase-activating protein. In Dictyostelium discoideum (Social amoeba), this protein is RhoGEF domain-containing protein gxcJ (gxcJ).